The sequence spans 202 residues: Holliday junction branch migration complex subunit RuvA (202 aa).

Residues 1 to 64 (MFAYIRGRLE…EDVISLYGFL (64 aa)) are domain I. Residues 65 to 143 (TQEELNVFEL…KEQLTEYAQS (79 aa)) form a domain II region. The tract at residues 144 to 152 (EEGGKVLDT) is flexible linker. The domain III stretch occupies residues 152–202 (TDSSKMAEAVSALMVLGYSPAEANKAVSAVYREDMDIETIIKNALKGLARP).

This sequence belongs to the RuvA family. In terms of assembly, homotetramer. Forms an RuvA(8)-RuvB(12)-Holliday junction (HJ) complex. HJ DNA is sandwiched between 2 RuvA tetramers; dsDNA enters through RuvA and exits via RuvB. An RuvB hexamer assembles on each DNA strand where it exits the tetramer. Each RuvB hexamer is contacted by two RuvA subunits (via domain III) on 2 adjacent RuvB subunits; this complex drives branch migration. In the full resolvosome a probable DNA-RuvA(4)-RuvB(12)-RuvC(2) complex forms which resolves the HJ.

It is found in the cytoplasm. The RuvA-RuvB-RuvC complex processes Holliday junction (HJ) DNA during genetic recombination and DNA repair, while the RuvA-RuvB complex plays an important role in the rescue of blocked DNA replication forks via replication fork reversal (RFR). RuvA specifically binds to HJ cruciform DNA, conferring on it an open structure. The RuvB hexamer acts as an ATP-dependent pump, pulling dsDNA into and through the RuvAB complex. HJ branch migration allows RuvC to scan DNA until it finds its consensus sequence, where it cleaves and resolves the cruciform DNA. The protein is Holliday junction branch migration complex subunit RuvA of Acetivibrio thermocellus (strain ATCC 27405 / DSM 1237 / JCM 9322 / NBRC 103400 / NCIMB 10682 / NRRL B-4536 / VPI 7372) (Clostridium thermocellum).